Reading from the N-terminus, the 569-residue chain is Glutamate--tRNA ligase, chloroplastic/mitochondrial (569 aa).

59-61 (RFA) lines the L-glutamate pocket. The short motif at 62 to 72 (PSPTGNLHVGG) is the 'HIGH' region element. Histidine 69 provides a ligand contact to ATP. L-glutamate contacts are provided by residues glutamate 95, 247–251 (YNFCV), and arginine 265. Residues glutamate 268 and 303 to 307 (KLSKR) each bind ATP. A 'KMSKS' region motif is present at residues 303-307 (KLSKR).

This sequence belongs to the class-I aminoacyl-tRNA synthetase family. Glutamate--tRNA ligase type 1 subfamily.

Its subcellular location is the plastid. It is found in the chloroplast. The protein resides in the mitochondrion. It catalyses the reaction tRNA(Glu) + L-glutamate + ATP = L-glutamyl-tRNA(Glu) + AMP + diphosphate. Functionally, catalyzes the attachment of glutamate to tRNA(Glu) in a two-step reaction: glutamate is first activated by ATP to form Glu-AMP and then transferred to the acceptor end of tRNA(Glu). This Nicotiana tabacum (Common tobacco) protein is Glutamate--tRNA ligase, chloroplastic/mitochondrial.